The primary structure comprises 63 residues: Small ribosomal subunit protein eS17 (63 aa).

This sequence belongs to the eukaryotic ribosomal protein eS17 family.

The sequence is that of Small ribosomal subunit protein eS17 from Methanococcus maripaludis (strain DSM 14266 / JCM 13030 / NBRC 101832 / S2 / LL).